The sequence spans 415 residues: Queuine tRNA-ribosyltransferase accessory subunit 2 (415 aa).

4 residues coordinate Zn(2+): cysteine 351, cysteine 353, cysteine 356, and histidine 382.

The protein belongs to the queuine tRNA-ribosyltransferase family. QTRT2 subfamily. Heterodimer of a catalytic subunit QTRT1 and an accessory subunit QTRT2. It depends on Zn(2+) as a cofactor.

The protein localises to the cytoplasm. It is found in the mitochondrion outer membrane. Functionally, non-catalytic subunit of the queuine tRNA-ribosyltransferase (TGT) that catalyzes the base-exchange of a guanine (G) residue with queuine (Q) at position 34 (anticodon wobble position) in tRNAs with GU(N) anticodons (tRNA-Asp, -Asn, -His and -Tyr), resulting in the hypermodified nucleoside queuosine (7-(((4,5-cis-dihydroxy-2-cyclopenten-1-yl)amino)methyl)-7-deazaguanosine). In Pongo abelii (Sumatran orangutan), this protein is Queuine tRNA-ribosyltransferase accessory subunit 2.